We begin with the raw amino-acid sequence, 61 residues long: Large ribosomal subunit protein eL29y (61 aa).

The segment at 1–61 (MAKSKNHTAH…KSGENAGVEE (61 aa)) is disordered. A compositionally biased stretch (basic residues) spans 15 to 31 (KAHKNGIKKPRRHRHTP).

Belongs to the eukaryotic ribosomal protein eL29 family.

The polypeptide is Large ribosomal subunit protein eL29y (RPL29B) (Arabidopsis thaliana (Mouse-ear cress)).